The sequence spans 264 residues: Small ribosomal subunit protein eS1 (264 aa).

Lys34 is modified (N6-acetyllysine; alternate). A Glycyl lysine isopeptide (Lys-Gly) (interchain with G-Cter in SUMO2); alternate cross-link involves residue Lys34. Lys56 carries the N6-acetyllysine modification. Tyr155 bears the ADP-ribosyltyrosine mark. The tract at residues Gly233–Val264 is disordered. At Ser237 the chain carries Phosphoserine. Positions Ala242 to Gly255 are enriched in basic and acidic residues. Lys249 carries the N6-acetyllysine; alternate modification. Lys249 is covalently cross-linked (Glycyl lysine isopeptide (Lys-Gly) (interchain with G-Cter in SUMO2); alternate). Tyr256 carries the post-translational modification Phosphotyrosine. At Ser263 the chain carries Phosphoserine.

This sequence belongs to the eukaryotic ribosomal protein eS1 family. Component of the small ribosomal subunit. Mature ribosomes consist of a small (40S) and a large (60S) subunit. The 40S subunit contains about 33 different proteins and 1 molecule of RNA (18S). The 60S subunit contains about 49 different proteins and 3 molecules of RNA (28S, 5.8S and 5S). Identified in a IGF2BP1-dependent mRNP granule complex containing untranslated mRNAs. Binds with high affinity to IPO4. Interacts with DDIT3. Part of the small subunit (SSU) processome, composed of more than 70 proteins and the RNA chaperone small nucleolar RNA (snoRNA) U3. In terms of processing, ADP-ribosylated at Tyr-155 by PARP1 in presence of HPF1.

The protein localises to the cytoplasm. Its subcellular location is the nucleus. The protein resides in the nucleolus. In terms of biological role, component of the small ribosomal subunit. The ribosome is a large ribonucleoprotein complex responsible for the synthesis of proteins in the cell. Part of the small subunit (SSU) processome, first precursor of the small eukaryotic ribosomal subunit. During the assembly of the SSU processome in the nucleolus, many ribosome biogenesis factors, an RNA chaperone and ribosomal proteins associate with the nascent pre-rRNA and work in concert to generate RNA folding, modifications, rearrangements and cleavage as well as targeted degradation of pre-ribosomal RNA by the RNA exosome. May play a role during erythropoiesis through regulation of transcription factor DDIT3. This chain is Small ribosomal subunit protein eS1 (Rps3a), found in Mus musculus (Mouse).